A 134-amino-acid chain; its full sequence is Protein Turandot E (134 aa).

An N-terminal signal peptide occupies residues 1-38; it reads MSNTRTVHSSTSISKMNSALQISCLLVVLGCLLGSGHC.

The protein belongs to the Turandot family.

The protein resides in the secreted. Functionally, a humoral factor that may play a role in stress tolerance. The protein is Protein Turandot E of Drosophila melanogaster (Fruit fly).